Consider the following 632-residue polypeptide: Chaperone protein HtpG (632 aa).

Residues 1 to 339 (MAHETMSFQA…SADLPLNVSR (339 aa)) form an a; substrate-binding region. Positions 340-559 (EILQESRDVK…DNDMSGYLQR (220 aa)) are b. Residues 560 to 632 (MLKAAGQNAP…TNALLLSRAA (73 aa)) form a c region.

The protein belongs to the heat shock protein 90 family. Homodimer.

It localises to the cytoplasm. Functionally, molecular chaperone. Has ATPase activity. The sequence is that of Chaperone protein HtpG from Burkholderia cenocepacia (strain HI2424).